We begin with the raw amino-acid sequence, 664 residues long: Methionine--tRNA ligase (664 aa).

Positions 13-23 match the 'HIGH' region motif; that stretch reads PYTNGPCHIGH. C144, C147, C156, and C160 together coordinate Zn(2+). The 'KMSKS' region signature appears at 327-331; the sequence is KFSKS. K330 provides a ligand contact to ATP. The region spanning 566-664 is the tRNA-binding domain; it reads EFGNLDIRIA…RPVKPGTKIR (99 aa).

This sequence belongs to the class-I aminoacyl-tRNA synthetase family. MetG type 1 subfamily. As to quaternary structure, homodimer. It depends on Zn(2+) as a cofactor.

It is found in the cytoplasm. It carries out the reaction tRNA(Met) + L-methionine + ATP = L-methionyl-tRNA(Met) + AMP + diphosphate. Its function is as follows. Is required not only for elongation of protein synthesis but also for the initiation of all mRNA translation through initiator tRNA(fMet) aminoacylation. This chain is Methionine--tRNA ligase, found in Methanoculleus marisnigri (strain ATCC 35101 / DSM 1498 / JR1).